Reading from the N-terminus, the 447-residue chain is Methylenetetrahydrofolate--tRNA-(uracil-5-)-methyltransferase TrmFO (447 aa).

10–15 (GAGLAG) is an FAD binding site.

This sequence belongs to the MnmG family. TrmFO subfamily. It depends on FAD as a cofactor.

It localises to the cytoplasm. The enzyme catalyses uridine(54) in tRNA + (6R)-5,10-methylene-5,6,7,8-tetrahydrofolate + NADH + H(+) = 5-methyluridine(54) in tRNA + (6S)-5,6,7,8-tetrahydrofolate + NAD(+). It carries out the reaction uridine(54) in tRNA + (6R)-5,10-methylene-5,6,7,8-tetrahydrofolate + NADPH + H(+) = 5-methyluridine(54) in tRNA + (6S)-5,6,7,8-tetrahydrofolate + NADP(+). Catalyzes the folate-dependent formation of 5-methyl-uridine at position 54 (M-5-U54) in all tRNAs. The chain is Methylenetetrahydrofolate--tRNA-(uracil-5-)-methyltransferase TrmFO from Lactococcus lactis subsp. lactis (strain IL1403) (Streptococcus lactis).